The sequence spans 379 residues: Lipoyl synthase, mitochondrial (379 aa).

C106, C111, C117, C137, C141, C144, and S352 together coordinate [4Fe-4S] cluster. One can recognise a Radical SAM core domain in the interval 122 to 341 (EHGTQTATIM…EERGNALGFL (220 aa)).

Belongs to the radical SAM superfamily. Lipoyl synthase family. [4Fe-4S] cluster serves as cofactor.

The protein resides in the mitochondrion. It carries out the reaction [[Fe-S] cluster scaffold protein carrying a second [4Fe-4S](2+) cluster] + N(6)-octanoyl-L-lysyl-[protein] + 2 oxidized [2Fe-2S]-[ferredoxin] + 2 S-adenosyl-L-methionine + 4 H(+) = [[Fe-S] cluster scaffold protein] + N(6)-[(R)-dihydrolipoyl]-L-lysyl-[protein] + 4 Fe(3+) + 2 hydrogen sulfide + 2 5'-deoxyadenosine + 2 L-methionine + 2 reduced [2Fe-2S]-[ferredoxin]. It participates in protein modification; protein lipoylation via endogenous pathway; protein N(6)-(lipoyl)lysine from octanoyl-[acyl-carrier-protein]: step 2/2. Its function is as follows. Catalyzes the radical-mediated insertion of two sulfur atoms into the C-6 and C-8 positions of the octanoyl moiety bound to the lipoyl domains of lipoate-dependent enzymes, thereby converting the octanoylated domains into lipoylated derivatives. This is Lipoyl synthase, mitochondrial from Drosophila erecta (Fruit fly).